We begin with the raw amino-acid sequence, 1077 residues long: Deoxyribonuclease CdiA (1077 aa).

The FHA-2 stretch occupies residues 67–384 (IGTSRQKTTD…DRDNYDAKQS (318 aa)). Residues 531-546 (QQNVDDLSRDTGNANG) are compositionally biased toward polar residues. A disordered region spans residues 531–555 (QQNVDDLSRDTGNANGSIGPIFDKE). A VENN CT cleavage motif motif is present at residues 781–784 (VENN). The interval 954 to 1077 (MPWEDYVGKT…GVKVTVTQVK (124 aa)) is DNase activity.

In terms of assembly, interacts with cognate immunity protein CdiI-YPIII, which blocks its toxic DNase activity. Zn(2+) is required as a cofactor.

It is found in the target cell. Its subcellular location is the target cell cytoplasm. In terms of biological role, toxic component of a toxin-immunity protein module, which functions as a cellular contact-dependent growth inhibition (CDI) system. CDI modules allow bacteria to communicate with and inhibit the growth of closely related neighboring bacteria in a contact-dependent fashion. The C-terminal 123 residues (954-1077) has DNase activity in the presence of Zn(2+), converting supercoiled DNA into open-circular form. Toxic activity is neutralized by coexpression of the cognate immunity protein CdiI-YPIII, but not by non-cognate immunity proteins from other toxin-immunity modules. Expression of the DNase domain as a chimera allows bacteria to attack other non-immune bacteria which become filamentous and have lost DNA staining. The CdiA protein is thought to be exported from the cell through the central lumen of CdiB, the other half of its two-partner system (TPS). The TPS domain probably remains associated with CdiB while the FHA-1 domain forms an extended filament with the receptor-binding domain (RBD) at its extremity; in the secretion arrested state the C-terminus of the RBD and YP domains form a hairpin-like structure as the FHA-2, PT and CT domains are periplasmic. The YP domain is probably responsible for this arrest at the point where it re-enters the host cell periplasm. Upon binding to a target cell outer membrane receptor a signal is transmitted to activate secretion. The filament elongates slightly, the rest of CdiA is secreted and the FHA-2 domain becomes stably associated with the target cell's outer membrane where it facilitates entry of the toxic CT domain into the target cell periplasm. From there the toxic CT domain is cleaved and gains access to the target cell cytoplasm via an inner membrane protein. This is Deoxyribonuclease CdiA from Yersinia pseudotuberculosis serotype O:3 (strain YPIII).